Consider the following 491-residue polypeptide: Stromelysin-3 (491 aa).

The N-terminal stretch at 1–35 is a signal peptide; that stretch reads MARAACLLRAISRALLLPLPLLLLLLLLLPPQLMA. Residues 36 to 101 constitute a propeptide, activation peptide; the sequence is RARPPENHRH…VLNARNRQKR (66 aa). Residues 82-89 carry the Cysteine switch motif; the sequence is LRCGVPDP. Residues cysteine 84, histidine 168, and aspartate 170 each contribute to the Zn(2+) site. The Ca(2+) site is built by aspartate 175, glycine 176, glycine 178, and isoleucine 180. Zn(2+) contacts are provided by histidine 183, histidine 196, and histidine 218. Residue glutamate 219 is part of the active site. Zn(2+) is bound by residues histidine 222 and histidine 228. The disordered stretch occupies residues 260-279; the sequence is YGRPQLTPTSPTPTLSSQAG. The segment covering 263-277 has biased composition (low complexity); sequence PQLTPTSPTPTLSSQ. Cysteine 297 and cysteine 483 form a disulfide bridge. Hemopexin repeat units follow at residues 298 to 342, 343 to 385, 387 to 435, and 436 to 483; these read ETSF…WQGL, PSPV…KLGL, GSPV…WRGV, and PSEI…FFDC.

This sequence belongs to the peptidase M10A family. The cofactor is Ca(2+). Zn(2+) serves as cofactor. In terms of processing, the precursor is cleaved by a furin endopeptidase. Highly expressed in ovary and uterus.

The protein localises to the secreted. Its subcellular location is the extracellular space. It localises to the extracellular matrix. Functionally, may play an important role in the progression of epithelial malignancies. This is Stromelysin-3 (Mmp11) from Rattus norvegicus (Rat).